An 885-amino-acid chain; its full sequence is DNA mismatch repair protein MutS (885 aa).

G626–S633 contacts ATP.

This sequence belongs to the DNA mismatch repair MutS family.

This protein is involved in the repair of mismatches in DNA. It is possible that it carries out the mismatch recognition step. This protein has a weak ATPase activity. This Burkholderia orbicola (strain MC0-3) protein is DNA mismatch repair protein MutS.